The sequence spans 109 residues: Large ribosomal subunit protein uL24 (109 aa).

The protein belongs to the universal ribosomal protein uL24 family. In terms of assembly, part of the 50S ribosomal subunit.

Functionally, one of two assembly initiator proteins, it binds directly to the 5'-end of the 23S rRNA, where it nucleates assembly of the 50S subunit. Its function is as follows. One of the proteins that surrounds the polypeptide exit tunnel on the outside of the subunit. The sequence is that of Large ribosomal subunit protein uL24 from Legionella pneumophila subsp. pneumophila (strain Philadelphia 1 / ATCC 33152 / DSM 7513).